The following is a 249-amino-acid chain: Ditrans,polycis-undecaprenyl-diphosphate synthase ((2E,6E)-farnesyl-diphosphate specific) (249 aa).

The active site involves D18. D18 provides a ligand contact to Mg(2+). Residues 19–22, F23, K31, H35, and 63–65 contribute to the substrate site; these read GNNR and SSE. N66 (proton acceptor) is an active-site residue. Substrate-binding positions include W67, R69, R186, and 192-194; that span reads RLS. Residue E205 participates in Mg(2+) binding.

This sequence belongs to the UPP synthase family. As to quaternary structure, homodimer. Mg(2+) serves as cofactor.

It carries out the reaction 8 isopentenyl diphosphate + (2E,6E)-farnesyl diphosphate = di-trans,octa-cis-undecaprenyl diphosphate + 8 diphosphate. In terms of biological role, catalyzes the sequential condensation of isopentenyl diphosphate (IPP) with (2E,6E)-farnesyl diphosphate (E,E-FPP) to yield (2Z,6Z,10Z,14Z,18Z,22Z,26Z,30Z,34E,38E)-undecaprenyl diphosphate (di-trans,octa-cis-UPP). UPP is the precursor of glycosyl carrier lipid in the biosynthesis of bacterial cell wall polysaccharide components such as peptidoglycan and lipopolysaccharide. The polypeptide is Ditrans,polycis-undecaprenyl-diphosphate synthase ((2E,6E)-farnesyl-diphosphate specific) (Acinetobacter baylyi (strain ATCC 33305 / BD413 / ADP1)).